The chain runs to 938 residues: Myocardin (938 aa).

The short motif at 12 to 27 (IRSKFRSVLQLRLQQR) is the MEF2C-binding element. The stretch at 18-43 (SVLQLRLQQRRTQEQLANQGIIPPLK) is one RPEL 1 repeat. Positions 48–61 (FHEQRKHLDSDKAK) are enriched in basic and acidic residues. The segment at 48-68 (FHEQRKHLDSDKAKNSLKRKA) is disordered. RPEL repeat units lie at residues 62 to 87 (NSLK…QAST) and 106 to 131 (DDLN…PVDS). Residues 153–205 (FEEDSSSDGLSPDQTRSEDPQNSAGSPPDAKASDTPSTGSLGTNQDLASGSEN) form an HDAC5-binding region. Residues 154 to 281 (EEDSSSDGLS…DQKAEKSPPP (128 aa)) are disordered. 3 stretches are compositionally biased toward polar residues: residues 159–177 (SDGL…NSAG), 186–203 (DTPS…ASGS), and 210–220 (SASQPSHQSDA). Basic residues predominate over residues 248–265 (NRHKKPKDPKPKVKKLKY). Residues 371-405 (LDDLKVSELRQQLRIRGLPVSGTKTALMDRLRPFQ) enclose the SAP domain. Residues Ser-451, Ser-455, Ser-459, and Ser-463 each carry the phosphoserine; by GSK3-beta modification. The stretch at 516–561 (EKDKMLVEKQKVINELTWKLQQEQRQVEELRMQLQKQKRNNCSEKK) forms a coiled coil. Ser-626, Ser-630, Ser-634, and Ser-638 each carry phosphoserine; by GSK3-beta. Disordered stretches follow at residues 635–678 (PQHS…SSPI) and 693–734 (SDKV…MTRS). A compositionally biased stretch (low complexity) spans 699–715 (KFSIPSPTFSKSSSAIS). A required for interaction with and ubiquitination by STUB1 region spans residues 717 to 938 (VTQPPSYEDA…SSMDLHLQQW (222 aa)). Residues Ser-815, Ser-862, and Ser-869 each carry the phosphoserine; by MAPK1 and MAPK3 modification. Thr-896 is modified (phosphothreonine; by MAPK1 and MAPK3).

Homodimer. Interacts with SRF, its association does not depend on specific DNA sequences for ternary complex formation. Interacts with MLLT7/FOXO4. Interacts (via C-terminal) with EP300 (via the CREB-binding domain). Interacts with HDAC4 and HDAC5. Interacts with MEF2C. Interacts (via C-terminus) with STUB1/CHIP. Interacts with PURB. Ubiquitinated; by STUB1/CHIP at the C-terminus, leading to its degradation by the proteasome. Phosphorylation by GSK3B is required for STUB1/CHIP-mediated ubiquitination. In terms of processing, phosphorylation negatively regulates the intrinsic myocardin transcriptional activity. Phosphorylated; by GSK3B. Expressed in the heart, aorta and bladder. Expressed in smooth muscle cell-containing tissues: stomach, small intestine, colon, lung, placenta and uterus. Very faint expression in prostate and skeletal muscle.

The protein resides in the nucleus. Smooth muscle cells (SM) and cardiac muscle cells-specific transcriptional factor which uses the canonical single or multiple CArG boxes DNA sequence. Acts as a cofactor of serum response factor (SRF) with the potential to modulate SRF-target genes. Plays a crucial role in cardiogenesis, urinary bladder development, and differentiation of the smooth muscle cell lineage (myogenesis). Positively regulates the transcription of genes involved in vascular smooth muscle contraction. The polypeptide is Myocardin (MYOCD) (Homo sapiens (Human)).